We begin with the raw amino-acid sequence, 238 residues long: Splicing regulator RBM11 (238 aa).

In terms of domain architecture, RRM spans 10 to 87 (RTVFVGNLEA…RPINVQYRFG (78 aa)). The tract at residues 172 to 238 (ALNHSPGPEA…CRKCKKKKRY (67 aa)) is disordered. The Bipartite nuclear localization signal signature appears at 202 to 237 (NKRKRQRPDSDSDSSSEDKRGNEGSQKCRKCKKKKR). Basic residues predominate over residues 228–238 (KCRKCKKKKRY).

Homodimer. As to expression, selectively expressed in brain, cerebellum and testis, and to a lower extent in kidney.

The protein localises to the nucleus. It is found in the nucleoplasm. It localises to the nucleus speckle. Functionally, tissue-specific splicing factor with potential implication in the regulation of alternative splicing during neuron and germ cell differentiation. Antagonizes SRSF1-mediated BCL-X splicing. May affect the choice of alternative 5' splice sites by binding to specific sequences in exons and antagonizing the SR protein SRSF1. This Mus musculus (Mouse) protein is Splicing regulator RBM11 (Rbm11).